The chain runs to 503 residues: MQYRDLRDFLAQLERIGELRRIRVPVSPRLEMTEVCDRLLRAEGPAVVFERPADGAQTYDMPVLANLFGTPRRVALGMGAESLDELRDVGRLLSALKEPEPPRGLREAGKLWTMAKAVWDMAPRKVSSPACQEIVLEGDDVDLSRIPVQTCWPGDAAPLVTWGLVVTRGPHKKRQNLGIYRQQVINRNQVIMRWLAHRGGALDFREHAIAHPGQPFPIAVALGADPATILGAVTPVPDTLSEYQFAGLLRGSRTELAQCLTPSLAQAQLQVPAGAEIVLEGHIQPDPAHPSGYQHALEGPFGDHTGYYNEQDWFPVFTVERITMRRDPIYHSTYTGKPPDEPAVLGVALNEVFVPLLQKQFPEIADFYLPPEGCSYRMALVSMKKQYAGHAKRVMFGVWSFLRQFMYTKFIVVVDDDVDLRDWKEVIWAITTRVDPARDTVMVENTPIDYLDFASPVSGLGSKMGIDATNKWPGETTREWGQPIVMDAAVKSRVDAMWETLFQ.

Asn176 provides a ligand contact to Mn(2+). Prenylated FMN contacts are provided by residues 179-181 (IYR), 193-195 (RWL), and 198-199 (RG). Residue Glu242 coordinates Mn(2+). Asp303 (proton donor) is an active-site residue.

It belongs to the UbiD family. As to quaternary structure, homohexamer. The cofactor is prenylated FMN. Mn(2+) serves as cofactor.

The protein localises to the cell membrane. The enzyme catalyses a 4-hydroxy-3-(all-trans-polyprenyl)benzoate + H(+) = a 2-(all-trans-polyprenyl)phenol + CO2. The protein operates within cofactor biosynthesis; ubiquinone biosynthesis. Its function is as follows. Catalyzes the decarboxylation of 3-octaprenyl-4-hydroxy benzoate to 2-octaprenylphenol, an intermediate step in ubiquinone biosynthesis. The polypeptide is 3-octaprenyl-4-hydroxybenzoate carboxy-lyase (Ralstonia nicotianae (strain ATCC BAA-1114 / GMI1000) (Ralstonia solanacearum)).